The following is a 30-amino-acid chain: GCCGPYPNAACHPCGCKVGRPPYCDRPSGG.

3 cysteine pairs are disulfide-bonded: cysteine 2–cysteine 16, cysteine 3–cysteine 11, and cysteine 14–cysteine 24. Residues proline 7, proline 13, proline 21, proline 22, and proline 27 each carry the 4-hydroxyproline modification. A Glycine amide modification is found at glycine 30.

As to expression, expressed by the venom duct.

The protein resides in the secreted. Functionally, alpha-conotoxins act on postsynaptic membranes, they bind to the nicotinic acetylcholine receptors (nAChR) and thus inhibit them. This toxin binds with high affinity to both fetal (alpha-1-beta-1-epsilon-delta (CHRNA1-CHRNB1-CHRND-CHRNE) subunits) and adult (alpha-1/beta-1/gamma/delta subunits) mammalian muscle nicotinic acetylcholine receptors (nAChR). The polypeptide is Alpha-conotoxin EIVA (Conus ermineus (Agate cone)).